The following is a 1021-amino-acid chain: SWI/SNF-related matrix-associated actin-dependent regulator of chromatin subfamily A containing DEAD/H box 1 (1021 aa).

N-acetylmethionine is present on Met1. Disordered stretches follow at residues 1–82 (MNLF…SLSC) and 124–151 (SEPSEDEESHDLPSVTRRNDSSELEDLS). The segment covering 7-19 (DRFRFEKRSKIEE) has biased composition (basic and acidic residues). Over residues 22-39 (EAAPQPSQARPSSPISLS) the composition is skewed to low complexity. Thr54 is subject to Phosphothreonine. The residue at position 57 (Ser57) is a Phosphoserine. Lys77 participates in a covalent cross-link: Glycyl lysine isopeptide (Lys-Gly) (interchain with G-Cter in SUMO2). Ser79, Ser124, Ser127, Ser132, Ser144, Ser145, and Ser151 each carry phosphoserine. In terms of domain architecture, CUE 1 spans 156–198 (LKDAKLQTLKELFPQRSDSDLLKLIESTSTMDGAIAAALLMFG). Positions 201–246 (GGGPRKRKLSSSSEEDDVNDDQSVKQPRGDRGEESNESAEASSNWE) are disordered. A phosphoserine mark is found at Ser210, Ser213, Ser235, and Ser238. Residues 247–290 (KQESIVLKLQKEFPNFDKQELREVLKEHEWMYTEALESLKVFAE) form the CUE 2 domain. Residue Ser298 is modified to Phosphoserine. Positions 329–366 (VKPQNGFNKKRKKNVFNPKKAVEDSEYDSGSDAGSSLD) are disordered. Residues Lys330 and Lys466 each participate in a glycyl lysine isopeptide (Lys-Gly) (interchain with G-Cter in SUMO2) cross-link. Positions 504 to 672 (ALVHKHGLNG…MSLLNFVMPH (169 aa)) constitute a Helicase ATP-binding domain. 516 to 524 (ADEMGLGKT) contributes to the ATP binding site. Positions 623–626 (DEGH) match the DEGH box motif. A Nuclear localization signal motif is present at residues 716–733 (RRVKEEVLKLLPPKKDRI). A Glycyl lysine isopeptide (Lys-Gly) (interchain with G-Cter in SUMO2) cross-link involves residue Lys719. Residues 853 to 1005 (ALGCILSELK…MTTVDEADEG (153 aa)) form the Helicase C-terminal domain. 892 to 899 (YLRLDGKT) serves as a coordination point for ATP. Lys991 is covalently cross-linked (Glycyl lysine isopeptide (Lys-Gly) (interchain with G-Cter in SUMO2)). Positions 1000–1003 (DEAD) match the DEAD box motif.

Belongs to the SNF2/RAD54 helicase family. As to quaternary structure, binds to DNA preferentially in the vicinity of transcriptional start sites. Interacts with MSH2 and TRIM28. Part of a complex composed of TRIM28, HDAC1, HDAC2 and EHMT2. Interacts with PCNA.

The protein localises to the nucleus. Its subcellular location is the chromosome. The catalysed reaction is ATP + H2O = ADP + phosphate + H(+). Its function is as follows. DNA helicase that possesses intrinsic ATP-dependent nucleosome-remodeling activity and is both required for DNA repair and heterochromatin organization. Promotes DNA end resection of double-strand breaks (DSBs) following DNA damage: probably acts by weakening histone DNA interactions in nucleosomes flanking DSBs. Required for the restoration of heterochromatin organization after replication. Acts at replication sites to facilitate the maintenance of heterochromatin by directing H3 and H4 histones deacetylation, H3 'Lys-9' trimethylation (H3K9me3) and restoration of silencing. This Mus musculus (Mouse) protein is SWI/SNF-related matrix-associated actin-dependent regulator of chromatin subfamily A containing DEAD/H box 1 (Smarcad1).